We begin with the raw amino-acid sequence, 465 residues long: Argininosuccinate lyase (465 aa).

This sequence belongs to the lyase 1 family. Argininosuccinate lyase subfamily.

The protein resides in the cytoplasm. It carries out the reaction 2-(N(omega)-L-arginino)succinate = fumarate + L-arginine. Its pathway is amino-acid biosynthesis; L-arginine biosynthesis; L-arginine from L-ornithine and carbamoyl phosphate: step 3/3. The polypeptide is Argininosuccinate lyase (Deinococcus geothermalis (strain DSM 11300 / CIP 105573 / AG-3a)).